Consider the following 642-residue polypeptide: Sec1 family domain-containing protein 1 (642 aa).

Residue A2 is modified to N-acetylalanine. 3 positions are modified to phosphoserine: S37, S303, and S528.

Belongs to the STXBP/unc-18/SEC1 family. As to quaternary structure, interacts with STX17. Interacts with STX5A. Interacts with the COG complex via COG4.

Its subcellular location is the cytoplasm. The protein resides in the endoplasmic reticulum membrane. The protein localises to the golgi apparatus. It is found in the golgi stack membrane. Functionally, plays a role in SNARE-pin assembly and Golgi-to-ER retrograde transport via its interaction with COG4. Involved in vesicular transport between the endoplasmic reticulum and the Golgi. The protein is Sec1 family domain-containing protein 1 (SCFD1) of Homo sapiens (Human).